Reading from the N-terminus, the 77-residue chain is uncharacterized protein (77 aa).

A helical membrane pass occupies residues 57 to 76 (NSAVICTLIANLMAFFMLLT).

It is found in the membrane. This is an uncharacterized protein from Schizosaccharomyces pombe (strain 972 / ATCC 24843) (Fission yeast).